Reading from the N-terminus, the 569-residue chain is Oxygen-dependent choline dehydrogenase (569 aa).

9-38 provides a ligand contact to FAD; sequence DYVIIGGGSAGSVLGNRLSEDKDKEVLVLE. The active-site Proton acceptor is His475.

It belongs to the GMC oxidoreductase family. FAD is required as a cofactor.

The enzyme catalyses choline + A = betaine aldehyde + AH2. The catalysed reaction is betaine aldehyde + NAD(+) + H2O = glycine betaine + NADH + 2 H(+). It participates in amine and polyamine biosynthesis; betaine biosynthesis via choline pathway; betaine aldehyde from choline (cytochrome c reductase route): step 1/1. Its function is as follows. Involved in the biosynthesis of the osmoprotectant glycine betaine. Catalyzes the oxidation of choline to betaine aldehyde and betaine aldehyde to glycine betaine at the same rate. This chain is Oxygen-dependent choline dehydrogenase, found in Staphylococcus aureus (strain MSSA476).